The primary structure comprises 393 residues: Phosphopentomutase (393 aa).

6 residues coordinate Mn(2+): Asp14, Asp287, His292, Asp328, His329, and His340.

This sequence belongs to the phosphopentomutase family. Mn(2+) serves as cofactor.

The protein localises to the cytoplasm. It carries out the reaction 2-deoxy-alpha-D-ribose 1-phosphate = 2-deoxy-D-ribose 5-phosphate. It catalyses the reaction alpha-D-ribose 1-phosphate = D-ribose 5-phosphate. It functions in the pathway carbohydrate degradation; 2-deoxy-D-ribose 1-phosphate degradation; D-glyceraldehyde 3-phosphate and acetaldehyde from 2-deoxy-alpha-D-ribose 1-phosphate: step 1/2. Functionally, isomerase that catalyzes the conversion of deoxy-ribose 1-phosphate (dRib-1-P) and ribose 1-phosphate (Rib-1-P) to deoxy-ribose 5-phosphate (dRib-5-P) and ribose 5-phosphate (Rib-5-P), respectively. The sequence is that of Phosphopentomutase from Geobacillus stearothermophilus (Bacillus stearothermophilus).